We begin with the raw amino-acid sequence, 359 residues long: 4-galactosyl-N-acetylglucosaminide 3-alpha-L-fucosyltransferase FUT6 (359 aa).

Residues 1–14 (MDPLGPAKPQWSWR) lie on the Cytoplasmic side of the membrane. Residues 15 to 34 (CCLTTLLFQLLMAVCFFSYL) traverse the membrane as a helical; Signal-anchor for type II membrane protein segment. Over 35–359 (RVSQDDPTVY…QTRGIAAWFT (325 aa)) the chain is Lumenal. Residues asparagine 46, asparagine 91, asparagine 153, and asparagine 184 are each glycosylated (N-linked (GlcNAc...) asparagine). Positions 73 to 112 (KPIALPRCSEMVPGTADCNITADRKVYPQADAVIVHHREV) are determines site-specific fucosylation.

The protein belongs to the glycosyltransferase 10 family. Homodimer and monomer. Monomer (secreted form). Post-translationally, N-glycosylated. In terms of processing, proteolytic cleavage releases a secreted glycoform of 43 kDa. In terms of tissue distribution, kidney, liver, colon, small intestine, bladder, uterus and salivary gland.

It localises to the golgi apparatus. Its subcellular location is the golgi stack membrane. It is found in the secreted. The enzyme catalyses a beta-D-galactosyl-(1-&gt;4)-N-acetyl-beta-D-glucosaminyl derivative + GDP-beta-L-fucose = a beta-D-galactosyl-(1-&gt;4)-[alpha-L-fucosyl-(1-&gt;3)]-N-acetyl-beta-D-glucosaminyl derivative + GDP + H(+). It carries out the reaction an N-acetyl-alpha-neuraminyl-(2-&gt;3)-beta-D-galactosyl-(1-&gt;4)-N-acetyl-beta-D-glucosaminyl derivative + GDP-beta-L-fucose = an alpha-Neu5Ac-(2-&gt;3)-beta-D-Gal-(1-&gt;4)-[alpha-L-Fuc-(1-&gt;3)]-beta-D-GlcNAc derivative + GDP + H(+). The catalysed reaction is an alpha-Neu5Ac-(2-&gt;3)-beta-D-Gal-(1-&gt;4)-beta-D-GlcNAc-(1-&gt;3)-beta-D-Gal-(1-&gt;4)-[alpha-L-Fuc-(1-&gt;3)]-beta-D-GlcNAc derivative + GDP-beta-L-fucose = an alpha-Neu5Ac-(2-&gt;3)-beta-D-Gal-(1-&gt;4)-[alpha-L-Fuc-(1-&gt;3)]-beta-D-GlcNAc-(1-&gt;3)-beta-D-Gal-(1-&gt;4)-[alpha-L-Fuc-(1-&gt;3)]-beta-D-GlcNAc derivative + GDP + H(+). It catalyses the reaction a neolactoside nLc6Cer + GDP-beta-L-fucose = beta-D-Gal-(1-&gt;4)-[alpha-L-Fuc-(1-&gt;3)]-beta-D-GlcNAc-(1-&gt;3)-beta-D-Gal-(1-&gt;4)-beta-D-GlcNAc-(1-&gt;3)-beta-D-Gal-(1-&gt;4)-beta-D-Glc-(1&lt;-&gt;1')-Cer + GDP + H(+). The enzyme catalyses a neolactoside nLc6Cer + GDP-beta-L-fucose = beta-D-galactosyl-(1-&gt;4)-N-acetyl-beta-D-glucosaminyl-(1-&gt;3)-beta-D-galactosyl-(1-&gt;4)-[alpha-L-fucosyl-(1-&gt;3)]-N-acetyl-beta-D-glucosaminyl-(1-&gt;3)-beta-D-galactosyl-(1-&gt;4)-beta-D-glucosyl-(1&lt;-&gt;1')-ceramide + GDP + H(+). It carries out the reaction a neolactoside VI(3)-alpha-NeuNAc-nLc6Cer + GDP-beta-L-fucose = a neolactoside VI(3)-alpha-NeuAc,V(3)-alphaFuc-nLc6Cer + GDP + H(+). The catalysed reaction is beta-D-galactosyl-(1-&gt;4)-N-acetyl-D-glucosamine + GDP-beta-L-fucose = beta-D-galactosyl-(1-&gt;4)-[alpha-L-fucosyl-(1-&gt;3)]-N-acetyl-D-glucosamine + GDP + H(+). It catalyses the reaction N-acetyl-alpha-neuraminosyl-(2-&gt;3)-beta-D-galactosyl-(1-&gt;4)-N-acetyl-beta-D-glucosamine + GDP-beta-L-fucose = N-acetyl-alpha-neuraminosyl-(2-&gt;3)-beta-D-galactosyl-(1-&gt;4)-[alpha-L-fucosyl-(1-&gt;3)]-N-acetyl-beta-D-glucosamine + GDP + H(+). The enzyme catalyses lactose + GDP-beta-L-fucose = beta-D-galactosyl-(1-&gt;4)-[alpha-L-fucosyl-(1-&gt;3)]-D-glucose + GDP + H(+). It carries out the reaction alpha-L-Fuc-(1-&gt;2)-beta-D-Gal-(1-&gt;4)-D-Glc + GDP-beta-L-fucose = alpha-L-Fuc-(1-&gt;2)-beta-D-Gal-(1-&gt;4)-[alpha-L-Fuc-(1-&gt;3)]-D-Glc + GDP + H(+). The catalysed reaction is a beta-D-galactosyl-(1-&gt;4)-N-acetyl-beta-D-6-sulfooxy-glucosaminyl derivative + GDP-beta-L-fucose = a beta-D-galactosyl-(1-&gt;4)-[alpha-L-fucosyl-(1-&gt;3)]-N-acetyl-beta-D-6-sulfooxy-glucosaminyl derivative + GDP + H(+). It functions in the pathway protein modification; protein glycosylation. Functionally, catalyzes the transfer of L-fucose, from a guanosine diphosphate-beta-L-fucose, to the N-acetyl glucosamine (GlcNAc) of a distal alpha2,3 sialylated lactosamine unit of a glycoprotein- or a glycolipid-linked sialopolylactosamines chain or of a distal or internal lactosamine unit of a neutral glycoprotein- or a glycolipid-linked polylactosamines chain through an alpha-1,3 glycosidic linkage and participates in surface expression of the sialyl Lewis X (sLe(x)), Lewis X (Le(x)) and non sialylated VIM2 determinants. Moreover transfers fucose to H-type 2 (Fucalpha1-2Galbeta1-4GlcNAc) chain acceptor substrates and participates in difucosylated sialyl Lewis x determinants. Also fucosylates a polylactosamine substrate having a 6 sulfate modification at the GlcNAc moiety and gives rise to sialyl and non-sialyl 6-sulfo lewis X. Does not have activity towards type 1 ((Galbeta1-3GlcNAc)) and H-type 1 chain (Fucalpha1-2Galbeta1-3GlcNAc) acceptors substrates. Does not have alpha(1,3)-fucosyltransferase activity. The protein is 4-galactosyl-N-acetylglucosaminide 3-alpha-L-fucosyltransferase FUT6 of Homo sapiens (Human).